Consider the following 404-residue polypeptide: MQIGQRLGTPLSPSATRVMLLGAGELGKEVIIALQRLGVEVIAVDRYPNAPGHQVAHRAHVIDMTDPDALRALVDAERPHLVVPEIEAIATDALAAIEAAGVCEVIPTARATQLTMNREGIRRLAAEELGLPTSPYAFAQSFDEFAAAVARIGFPCVVKPVMSSSGKGQSVVRSEADIEPAWRYAMAGGRVNHGRVIVEGFIRFDYEITQLTVRAIDPASGQTRTSFCAPIGHLQVAGDYVESWQPQPMSAKALERSRDIAHRVTSALGGRGIFGVELFVRGDDVWFSEVSPRPHDTGLVTLASQRQSEFELHARAILGLPVEPALATPAASAVIYGGLDEAGIAFEGVRDALAVPGADLRLFGKPESFAKRRMGVALATGANVDEARERAKRAAAAVRPVSAR.

N(1)-(5-phospho-beta-D-ribosyl)glycinamide-binding positions include 25 to 26 (EL) and Glu-85. Residues Arg-118, Lys-159, 164–169 (SSGKGQ), 199–202 (EGFI), and Glu-207 contribute to the ATP site. The region spanning 123 to 318 (RLAAEELGLP…EFELHARAIL (196 aa)) is the ATP-grasp domain. Mg(2+)-binding residues include Glu-277 and Glu-289. Residues Asp-296, Lys-365, and 372 to 373 (RR) contribute to the N(1)-(5-phospho-beta-D-ribosyl)glycinamide site.

It belongs to the PurK/PurT family. As to quaternary structure, homodimer.

The enzyme catalyses N(1)-(5-phospho-beta-D-ribosyl)glycinamide + formate + ATP = N(2)-formyl-N(1)-(5-phospho-beta-D-ribosyl)glycinamide + ADP + phosphate + H(+). Its pathway is purine metabolism; IMP biosynthesis via de novo pathway; N(2)-formyl-N(1)-(5-phospho-D-ribosyl)glycinamide from N(1)-(5-phospho-D-ribosyl)glycinamide (formate route): step 1/1. In terms of biological role, involved in the de novo purine biosynthesis. Catalyzes the transfer of formate to 5-phospho-ribosyl-glycinamide (GAR), producing 5-phospho-ribosyl-N-formylglycinamide (FGAR). Formate is provided by PurU via hydrolysis of 10-formyl-tetrahydrofolate. In Burkholderia pseudomallei (strain 1106a), this protein is Formate-dependent phosphoribosylglycinamide formyltransferase.